A 281-amino-acid chain; its full sequence is Bidirectional sugar transporter SWEET14 (281 aa).

Topologically, residues M1 to N6 are extracellular. The helical transmembrane segment at V7 to P27 threads the bilayer. A MtN3/slv 1 domain is found at T11–K97. Residues V28–G42 lie on the Cytoplasmic side of the membrane. Residues F43–L63 traverse the membrane as a helical segment. The Extracellular portion of the chain corresponds to Q64–F70. A helical transmembrane segment spans residues L71–I91. The Cytoplasmic segment spans residues T92–K104. Residues V105–T125 form a helical membrane-spanning segment. Residues K126 to K132 lie on the Extracellular side of the membrane. The helical transmembrane segment at V133–M153 threads the bilayer. In terms of domain architecture, MtN3/slv 2 spans V133 to Y216. At R154–P166 the chain is on the cytoplasmic side. Residues F167–I187 traverse the membrane as a helical segment. Topologically, residues K188–V192 are extracellular. Residues A193–F213 traverse the membrane as a helical segment. At K214–N281 the chain is on the cytoplasmic side. Polar residues predominate over residues T244–D259. Residues T244–N281 form a disordered region. The span at H267–N281 shows a compositional bias: basic and acidic residues.

Belongs to the SWEET sugar transporter family. In terms of assembly, forms homooligomers and/or heterooligomers.

The protein localises to the cell membrane. Its function is as follows. Mediates both low-affinity uptake and efflux of sugar across the plasma membrane. The protein is Bidirectional sugar transporter SWEET14 of Arabidopsis thaliana (Mouse-ear cress).